We begin with the raw amino-acid sequence, 375 residues long: MAQLCVALVAGEASGDILGSGLMRAIKARHPDVRFIGVGGPLMEAEGMSSYFPMERLAVMGLVEVLGRLRELLKRRKELIATLIDEKPDVFIGIDAPDFTLNIELKLRQAGIKTVHYVSPSVWAWRQKRVLKIREGCDLMLTLLPFEARFYEEQGVPVRFVGHPLADTIPLESDRGAARAELGLAEGPVIALMPGSRGGEVGRLGALFLDAAQRLRELVPGVRFVLPCANAARRAQVEQMLEGRDLPLTLLDGRSHQALAACDAVLIASGTATLEAMLYKRPMVVAYRLAPLTYWILKRMVKSPYVSLPNLLAQRMLVPELLQDAATSEALAQTLAPLVGDGSQQTDSFDQIHRTLRRDASNQAADAVLALLKDR.

The protein belongs to the LpxB family.

The enzyme catalyses a lipid X + a UDP-2-N,3-O-bis[(3R)-3-hydroxyacyl]-alpha-D-glucosamine = a lipid A disaccharide + UDP + H(+). Its pathway is bacterial outer membrane biogenesis; LPS lipid A biosynthesis. Its function is as follows. Condensation of UDP-2,3-diacylglucosamine and 2,3-diacylglucosamine-1-phosphate to form lipid A disaccharide, a precursor of lipid A, a phosphorylated glycolipid that anchors the lipopolysaccharide to the outer membrane of the cell. This Pseudomonas entomophila (strain L48) protein is Lipid-A-disaccharide synthase.